The chain runs to 370 residues: MVFLKVDCSKLFIFLCCIMSITILSFSLVFPYYESDFIIVNHTDIRNNTIVINKEFHQFQFFGTYFYDINRFEMKTSFNQAYLITKRVSYDSYDSSTKNSVFQIITSMTLTSLIAKVFPIPILIVNMYINLQKPKRRYLNQIQQHHNNNNNNNNNNNNNNNNNNNNNNNNNNNNNNNNNNNNQNNNNNDNNDNNDVLDGANEVVINTMPTYEVLMERYQSSASYYLITQLVVNGVSFMITLFSTFVVTHRISITMKLLTSIDEQIFNKPLCYTKNLDPFGYCNSFIGFSSTTSDENFMDFSWGPSFGWYLSLCSLCLDSFSIIVIIFLIITEGKLKKPKQPHKFTNILNLSDMDLINYRLLTLNQRIGTD.

Transmembrane regions (helical) follow at residues 11–31 (LFIF…LVFP) and 104–124 (IITS…PILI). The tract at residues 145 to 197 (HHNNNNNNNNNNNNNNNNNNNNNNNNNNNNNNNNNNNNQNNNNNDNNDNNDVL) is disordered. A compositionally biased stretch (low complexity) spans 147-194 (NNNNNNNNNNNNNNNNNNNNNNNNNNNNNNNNNNNNQNNNNNDNNDNN). The next 2 helical transmembrane spans lie at 227–247 (ITQL…TFVV) and 310–330 (LSLC…FLII).

The protein resides in the membrane. This is an uncharacterized protein from Dictyostelium discoideum (Social amoeba).